We begin with the raw amino-acid sequence, 131 residues long: MTTKRKPYVRPMTSTWWKKLPFYRFYMLREGTAVPAVWFSIELIFGLFALKNGPESWAGFVDFLQNPVIVIINLITLAAALLHTKTWFELAPKAANIIVKDEKMGPEPIIKSLWAVTVVATIVILFVALYW.

The next 3 helical transmembrane spans lie at 30 to 50 (EGTA…LFAL), 63 to 83 (FLQN…ALLH), and 109 to 129 (IIKS…FVAL).

Belongs to the FrdC family. In terms of assembly, part of an enzyme complex containing four subunits: a flavoprotein (FrdA), an iron-sulfur protein (FrdB), and two hydrophobic anchor proteins (FrdC and FrdD).

Its subcellular location is the cell inner membrane. Two distinct, membrane-bound, FAD-containing enzymes are responsible for the catalysis of fumarate and succinate interconversion; fumarate reductase is used in anaerobic growth, and succinate dehydrogenase is used in aerobic growth. Anchors the catalytic components of the fumarate reductase complex to the cell inner membrane, binds quinones. The sequence is that of Fumarate reductase subunit C from Escherichia coli O17:K52:H18 (strain UMN026 / ExPEC).